We begin with the raw amino-acid sequence, 1079 residues long: Tudor domain-containing protein 7A (1079 aa).

Residues 3 to 76 form the HTH OST-type 1 domain; it reads DVELVKKMLR…TGEVMCFAGV (74 aa). The segment at 153–175 is disordered; sequence LPSSRAPAWQMNRKSPVPEKTSV. HTH OST-type domains follow at residues 205-270 and 366-434; these read DVEL…RLVY and LTTE…ILYT. Tudor domains lie at 519–576 and 708–765; these read SPKI…FMTL and RPFC…FLKE.

It belongs to the TDRD7 family.

Its subcellular location is the cytoplasm. Its function is as follows. Component of specific cytoplasmic RNA granules involved in post-transcriptional regulation of specific genes: probably acts by binding to specific mRNAs and regulating their translation. Probably required during spermatogenesis. Required for structural integrity of granules in primordial germ cells (PGCs). The chain is Tudor domain-containing protein 7A (tdrd7a) from Danio rerio (Zebrafish).